A 276-amino-acid polypeptide reads, in one-letter code: Elongation factor Ts, mitochondrial (276 aa).

It belongs to the EF-Ts family.

The protein localises to the mitochondrion. Functionally, associates with the EF-Tu.GDP complex and induces the exchange of GDP to GTP. It remains bound to the aminoacyl-tRNA.EF-Tu.GTP complex up to the GTP hydrolysis stage on the ribosome. This is Elongation factor Ts, mitochondrial from Leishmania braziliensis.